The chain runs to 595 residues: 3-hydroxy-3-methylglutaryl-coenzyme A reductase 2 (595 aa).

N-linked (GlcNAc...) asparagine glycosylation is present at asparagine 35. The next 2 helical transmembrane spans lie at 48–68 and 92–112; these read LPLYLTNGLFFTMFFSVMYFL and AIVSLIASVIYLLGFFGIGFV. The interval 113 to 183 is linker; it reads QTFVSRGNND…SPLITPASSE (71 aa). Asparagine 121 carries N-linked (GlcNAc...) asparagine glycosylation. The segment at 184-595 is catalytic; the sequence is EDEEIINSVV…KYNRSTKASS (412 aa). The active-site Charge relay system is glutamate 278. N-linked (GlcNAc...) asparagine glycosylation is present at asparagine 342. Lysine 410 acts as the Charge relay system in catalysis. Asparagine 455 carries an N-linked (GlcNAc...) asparagine glycan. The active-site Charge relay system is aspartate 486. Histidine 584 (proton donor) is an active-site residue. A glycan (N-linked (GlcNAc...) asparagine) is linked at asparagine 588.

The protein belongs to the HMG-CoA reductase family. As to expression, expressed in young flowers and in mature sepals and ovaries.

It is found in the endoplasmic reticulum membrane. It catalyses the reaction (R)-mevalonate + 2 NADP(+) + CoA = (3S)-3-hydroxy-3-methylglutaryl-CoA + 2 NADPH + 2 H(+). Its pathway is metabolic intermediate biosynthesis; (R)-mevalonate biosynthesis; (R)-mevalonate from acetyl-CoA: step 3/3. In terms of biological role, catalyzes the synthesis of mevalonate. The specific precursor of all isoprenoid compounds present in plants. This is 3-hydroxy-3-methylglutaryl-coenzyme A reductase 2 (HMG2) from Solanum tuberosum (Potato).